We begin with the raw amino-acid sequence, 1157 residues long: Nitric oxide synthase, inducible (1157 aa).

The short motif at 23–27 is the DINNN-motif; mediates interaction with SPSB1, SPSB2 and SPSB4 element; it reads DINNN. The tract at residues 29-64 is disordered; sequence EKLRQASSSPVTQDDPKCPSRSRHRNECSQPLAETA. Zn(2+)-binding residues include C110 and C115. Heme b is bound at residue C200. L-arginine contacts are provided by Q263, W372, Y373, and E377. 4 residues coordinate (6R)-L-erythro-5,6,7,8-tetrahydrobiopterin: R381, I462, W463, and F476. Position 491 (Y491) interacts with heme b. Positions 515–535 are calmodulin-binding; it reads FKVLVKAVLFAAVLMHKTMAA. In terms of domain architecture, Flavodoxin-like spans 539 to 677; that stretch reads ATILFATETG…AFRGWAVQTF (139 aa). Residues T545, E546, T547, R549, S550, S591, T592, S628, C635, E661, and Q665 each coordinate FMN. An FAD-binding FR-type domain is found at 730–970; that stretch reads KYVFSMRLKS…VRSASGFQLP (241 aa). NADP(+) is bound at residue R750. Residues H772, R906, Y908, S909, T924, and A926 each contribute to the FAD site. An NADP(+)-binding site is contributed by T929. Positions 930, 943, 944, and 945 each coordinate FAD. Residues T984, R1017, S1046, R1047, K1053, Y1055, Q1057, and D1090 each coordinate NADP(+). The tract at residues 1138 to 1157 is disordered; that stretch reads KEGAVGPPSDPRAPGAHGKS.

It belongs to the NOS family. Homodimer. Interacts with NHERF1. Interacts with GAPDH; induced by oxidatively-modified low-densitity lipoprotein (LDL(ox)). Interacts with S100A8 and S100A9 to form the iNOS-S100A8/9 transnitrosylase complex. Interacts with SPSB1, SPSB2 and SPSB4. Interacts with ELOC and CUL5 in the presence of SPSB1 or SPSB2 or SPSB4. Forms a complex with ASL, ASS1 and HSP90AA1; the complex regulates cell-autonomous L-arginine synthesis and citrulline recycling while channeling extracellular L-arginine to nitric oxide synthesis pathway. Heme b is required as a cofactor. FAD serves as cofactor. Requires FMN as cofactor. It depends on (6R)-L-erythro-5,6,7,8-tetrahydrobiopterin as a cofactor. Post-translationally, polyubiquitinated; mediated by SPSB1, SPSB2 and SPSB4, leading to proteasomal degradation. Detected in both stimulated and unstimulated immune cells and macrophages with little or no up-regulation following cellular stimulation with lipopolysaccharides (LPS) or concanavalin A (ConA).

The protein localises to the cytoplasm. It localises to the cytosol. It catalyses the reaction 2 L-arginine + 3 NADPH + 4 O2 + H(+) = 2 L-citrulline + 2 nitric oxide + 3 NADP(+) + 4 H2O. Its activity is regulated as follows. Not stimulated by calcium/calmodulin. In terms of biological role, produces nitric oxide (NO) which is a messenger molecule with diverse functions throughout the body. In macrophages, NO mediates tumoricidal and bactericidal actions. Also has nitrosylase activity and mediates cysteine S-nitrosylation of cytoplasmic target proteins such PTGS2/COX2. As component of the iNOS-S100A8/9 transnitrosylase complex involved in the selective inflammatory stimulus-dependent S-nitrosylation of GAPDH implicated in regulation of the GAIT complex activity and probably multiple targets including ANXA5, EZR, MSN and VIM. Involved in inflammation, enhances the synthesis of pro-inflammatory mediators such as IL6 and IL8. In Sus scrofa (Pig), this protein is Nitric oxide synthase, inducible (NOS2).